A 450-amino-acid polypeptide reads, in one-letter code: Phosphoglucosamine mutase (450 aa).

Residue Ser-102 is the Phosphoserine intermediate of the active site. Mg(2+) is bound by residues Ser-102, Asp-244, Asp-246, and Asp-248. Ser-102 bears the Phosphoserine mark.

This sequence belongs to the phosphohexose mutase family. The cofactor is Mg(2+). Post-translationally, activated by phosphorylation.

It carries out the reaction alpha-D-glucosamine 1-phosphate = D-glucosamine 6-phosphate. In terms of biological role, catalyzes the conversion of glucosamine-6-phosphate to glucosamine-1-phosphate. The sequence is that of Phosphoglucosamine mutase from Nitratidesulfovibrio vulgaris (strain ATCC 29579 / DSM 644 / CCUG 34227 / NCIMB 8303 / VKM B-1760 / Hildenborough) (Desulfovibrio vulgaris).